A 578-amino-acid chain; its full sequence is Arginine--tRNA ligase (578 aa).

The 'HIGH' region signature appears at 127 to 137; the sequence is PNLAKEMHVGH.

It belongs to the class-I aminoacyl-tRNA synthetase family. As to quaternary structure, monomer.

Its subcellular location is the cytoplasm. It carries out the reaction tRNA(Arg) + L-arginine + ATP = L-arginyl-tRNA(Arg) + AMP + diphosphate. In Pseudomonas fluorescens (strain SBW25), this protein is Arginine--tRNA ligase.